Consider the following 792-residue polypeptide: Leucine--tRNA ligase (792 aa).

The short motif at 39 to 50 (PYPSAAGLHLGH) is the 'HIGH' region element. Residues 569–573 (KMSKS) carry the 'KMSKS' region motif. Residue K572 coordinates ATP.

The protein belongs to the class-I aminoacyl-tRNA synthetase family.

It localises to the cytoplasm. The catalysed reaction is tRNA(Leu) + L-leucine + ATP = L-leucyl-tRNA(Leu) + AMP + diphosphate. The protein is Leucine--tRNA ligase of Mycoplasma genitalium (strain ATCC 33530 / DSM 19775 / NCTC 10195 / G37) (Mycoplasmoides genitalium).